We begin with the raw amino-acid sequence, 213 residues long: Na(+)-translocating NADH-quinone reductase subunit D (213 aa).

The next 7 helical transmembrane spans lie at 21–41 (PLIA…VNTA), 42–62 (LTMG…VSLL), 77–97 (IIIS…FFDI), 101–121 (LSVF…AESL), 131–151 (FLDG…VSII), 153–173 (EFFG…FYAS), and 183–203 (FGLM…IWGV).

This sequence belongs to the NqrDE/RnfAE family. Composed of six subunits; NqrA, NqrB, NqrC, NqrD, NqrE and NqrF.

The protein localises to the cell inner membrane. The catalysed reaction is a ubiquinone + n Na(+)(in) + NADH + H(+) = a ubiquinol + n Na(+)(out) + NAD(+). Its function is as follows. NQR complex catalyzes the reduction of ubiquinone-1 to ubiquinol by two successive reactions, coupled with the transport of Na(+) ions from the cytoplasm to the periplasm. NqrA to NqrE are probably involved in the second step, the conversion of ubisemiquinone to ubiquinol. The sequence is that of Na(+)-translocating NADH-quinone reductase subunit D from Chlamydia abortus (strain DSM 27085 / S26/3) (Chlamydophila abortus).